Here is a 310-residue protein sequence, read N- to C-terminus: Inorganic pyrophosphatase, mitochondrial (310 aa).

The transit peptide at 1 to 30 directs the protein to the mitochondrion; that stretch reads MNLLRMNALTSKARSIERLKQTLNILSIRN. Residues D152, D157, and D189 each coordinate Mg(2+).

The protein belongs to the PPase family. As to quaternary structure, homodimer that binds non-covalently to a protein complex in the inner mitochondrial membrane. It depends on Mg(2+) as a cofactor.

It localises to the mitochondrion. The enzyme catalyses diphosphate + H2O = 2 phosphate + H(+). Its function is as follows. Involved in energy production. Its activity is stimulated by uncouplers of ATP synthesis. The polypeptide is Inorganic pyrophosphatase, mitochondrial (PPA2) (Saccharomyces cerevisiae (strain ATCC 204508 / S288c) (Baker's yeast)).